Consider the following 21-residue polypeptide: Cupiennin-6c (21 aa).

Serine 21 is modified (serine amide).

Expressed by the venom gland.

The protein localises to the secreted. The protein is Cupiennin-6c of Cupiennius salei (American wandering spider).